Reading from the N-terminus, the 1115-residue chain is Eukaryotic translation initiation factor 2-alpha kinase 3 (1115 aa).

Residues 1–29 form the signal peptide; it reads MERATGPGSLARTLLLPLLLGLVAGTVTA. Over 30–514 the chain is Extracellular; that stretch reads RRTSDLLAPT…PNYKNIRKKD (485 aa). A disordered region spans residues 74 to 101; it reads SEALPAAAGEQEAREPEPEPEEEPDIRP. N259 is a glycosylation site (N-linked (GlcNAc...) asparagine). The helical transmembrane segment at 515 to 535 threads the bilayer; the sequence is PVLLLHWWKEIVGTIVFCIVA. The Cytoplasmic segment spans residues 536-1115; it reads TTFIVRRLFH…SSPHSPLPSN (580 aa). The 484-residue stretch at 593–1076 folds into the Protein kinase domain; it reads FEPIQCMGRG…AASIIENAIF (484 aa). 599-607 lines the ATP pocket; that stretch reads MGRGGFGVV. Y619 carries the phosphotyrosine; by autocatalysis modification. An ATP-binding site is contributed by K622. Residues 647-887 form an insert loop region; the sequence is EHPGIVRYFN…SPKVYLYIQM (241 aa). Residue S715 is modified to Phosphoserine. T802 bears the Phosphothreonine mark. Disordered stretches follow at residues 807–832 and 841–860; these read VFED…VGNH and RHSG…SRPT. Polar residues predominate over residues 845-860; sequence SKSSEPTVSVSPSRPT. The Proton acceptor role is filled by D936. T981 is subject to Phosphothreonine. Residues 1087–1115 form a disordered region; that stretch reads LRQRSRSMSSPGAKHSRHSSSPHSPLPSN. Residue S1093 is modified to Phosphoserine.

It belongs to the protein kinase superfamily. Ser/Thr protein kinase family. GCN2 subfamily. In terms of assembly, forms dimers with HSPA5/BIP in resting cells. Homotetramerizes in response to endoplasmic reticulum (ER) stress, leading to its activation. Interacts with HSP90B1/GRP94. Interacts with DNAJC3; inhibiting EIF2AK3/PERK activity. Interacts with ATAD3A; ATAD3A and EIF2S1/eIF-2-alpha occupy a common binding site within the cytoplasmic loop of EIF2AK3/PERK, leading to prevent EIF2AK3/PERK association with its substrate EIF2S1/eIF-2-alpha. Interacts with MFN2. Interacts with TMEM33. Interacts with PDIA6. Interacts with LACC1. In terms of processing, oligomerization of the N-terminal ER luminal domain by ER stress promotes EIF2AK3/PERK trans-autophosphorylation of the C-terminal cytoplasmic kinase domain at multiple residues including Thr-981 on the kinase activation loop. Autophosphorylated at Tyr-619 following endoplasmic reticulum stress, leading to activate its activity. Dephosphorylated at Tyr-619 by PTPN1/PTP1B, leading to inactivate its enzyme activity. Phosphorylation at Thr-802 by AKT (AKT1, AKT2 and/or AKT3) inactivates EIF2AK3/PERK. Post-translationally, ADP-ribosylated by PARP16 upon ER stress, which increases kinase activity.

The protein resides in the endoplasmic reticulum membrane. The catalysed reaction is L-seryl-[protein] + ATP = O-phospho-L-seryl-[protein] + ADP + H(+). It carries out the reaction L-threonyl-[protein] + ATP = O-phospho-L-threonyl-[protein] + ADP + H(+). The enzyme catalyses L-tyrosyl-[protein] + ATP = O-phospho-L-tyrosyl-[protein] + ADP + H(+). Inhibited by HSPA5/BIP in absence of stress. Perturbation in protein folding in the endoplasmic reticulum (ER) promotes reversible dissociation from HSPA5/BIP and oligomerization, resulting in trans-autophosphorylation and kinase activity induction. Inactivated following phosphorylation at Thr-802 by AKT (AKT1, AKT2 and/or AKT3). Inhibited by ATAD3A at mitochondria-endoplasmic reticulum contact sites, providing a safe haven for mitochondrial protein translation during ER stress. Metabolic-stress sensing protein kinase that phosphorylates the alpha subunit of eukaryotic translation initiation factor 2 (EIF2S1/eIF-2-alpha) in response to various stress, such as unfolded protein response (UPR). Key effector of the integrated stress response (ISR) to unfolded proteins: EIF2AK3/PERK specifically recognizes and binds misfolded proteins, leading to its activation and EIF2S1/eIF-2-alpha phosphorylation. EIF2S1/eIF-2-alpha phosphorylation in response to stress converts EIF2S1/eIF-2-alpha in a global protein synthesis inhibitor, leading to a global attenuation of cap-dependent translation, while concomitantly initiating the preferential translation of ISR-specific mRNAs, such as the transcriptional activators ATF4 and QRICH1, and hence allowing ATF4- and QRICH1-mediated reprogramming. The EIF2AK3/PERK-mediated unfolded protein response increases mitochondrial oxidative phosphorylation by promoting ATF4-mediated expression of COX7A2L/SCAF1, thereby increasing formation of respiratory chain supercomplexes. In contrast to most subcellular compartments, mitochondria are protected from the EIF2AK3/PERK-mediated unfolded protein response due to EIF2AK3/PERK inhibition by ATAD3A at mitochondria-endoplasmic reticulum contact sites. In addition to EIF2S1/eIF-2-alpha, also phosphorylates NFE2L2/NRF2 in response to stress, promoting release of NFE2L2/NRF2 from the BCR(KEAP1) complex, leading to nuclear accumulation and activation of NFE2L2/NRF2. Serves as a critical effector of unfolded protein response (UPR)-induced G1 growth arrest due to the loss of cyclin-D1 (CCND1). Involved in control of mitochondrial morphology and function. This Bos taurus (Bovine) protein is Eukaryotic translation initiation factor 2-alpha kinase 3.